Consider the following 818-residue polypeptide: Lon protease (818 aa).

The Lon N-terminal domain maps to 14–216 (LPVLPLRDVV…KVFALIEREI (203 aa)). Residue 370–377 (GPPGVGKT) coordinates ATP. Residues 605 to 786 (ESLVGIVTGL…DEVIKVALMH (182 aa)) form the Lon proteolytic domain. Active-site residues include Ser692 and Lys735.

This sequence belongs to the peptidase S16 family. In terms of assembly, homohexamer. Organized in a ring with a central cavity.

Its subcellular location is the cytoplasm. It catalyses the reaction Hydrolysis of proteins in presence of ATP.. ATP-dependent serine protease that mediates the selective degradation of mutant and abnormal proteins as well as certain short-lived regulatory proteins. Required for cellular homeostasis and for survival from DNA damage and developmental changes induced by stress. Degrades polypeptides processively to yield small peptide fragments that are 5 to 10 amino acids long. Binds to DNA in a double-stranded, site-specific manner. The sequence is that of Lon protease from Wolbachia pipientis subsp. Culex pipiens (strain wPip).